An 81-amino-acid chain; its full sequence is MEKLTILLLVAAVLMSIQAVNQEKHQRAKMNLLSKRKPPAERWWRWGGCMAWFGLCSKDSECCSNSCDVTRCELMPFPPDW.

A signal peptide spans Met-1 to Ala-19. Residues Val-20–Trp-44 constitute a propeptide that is removed on maturation. Intrachain disulfides connect Cys-49/Cys-63, Cys-56/Cys-67, and Cys-62/Cys-72.

The protein belongs to the conotoxin O2 superfamily. As to expression, expressed by the venom duct.

Its subcellular location is the secreted. Inhibits voltage-gated ion channels. The chain is Conotoxin Vc6.7 from Conus victoriae (Queen Victoria cone).